A 100-amino-acid polypeptide reads, in one-letter code: MHLTPREQEKLLIVVAADLARRRQARGLKLNYPEAVAIITAELLEAARDGKSVAEIMSYGTTILTVDDVMDGVANMIHEVQVEATFPDGTKLVTVHDPIR.

The protein belongs to the urease gamma subunit family. In terms of assembly, heterotrimer of UreA (gamma), UreB (beta) and UreC (alpha) subunits. Three heterotrimers associate to form the active enzyme.

The protein resides in the cytoplasm. The catalysed reaction is urea + 2 H2O + H(+) = hydrogencarbonate + 2 NH4(+). The protein operates within nitrogen metabolism; urea degradation; CO(2) and NH(3) from urea (urease route): step 1/1. This chain is Urease subunit gamma, found in Herpetosiphon aurantiacus (strain ATCC 23779 / DSM 785 / 114-95).